Consider the following 490-residue polypeptide: UDP-glycosyltransferase 86A1 (490 aa).

UDP-alpha-D-glucose is bound by residues serine 294, 352–354, 369–377, and 391–394; these read CCQ, HCGWNSILE, and LTDQ.

The protein belongs to the UDP-glycosyltransferase family.

This Arabidopsis thaliana (Mouse-ear cress) protein is UDP-glycosyltransferase 86A1 (UGT86A1).